The following is a 382-amino-acid chain: 3-isopropylmalate dehydrogenase (382 aa).

91–102 (GPKWGTGSVRPE) is a binding site for NAD(+). Substrate-binding residues include R109, R119, R148, and D240. Mg(2+) is bound by residues D240, D265, and D269. Residue 304-315 (GSAPDLTENKVN) participates in NAD(+) binding.

The protein belongs to the isocitrate and isopropylmalate dehydrogenases family. Homodimer. Mg(2+) is required as a cofactor. The cofactor is Mn(2+).

It localises to the cytoplasm. It catalyses the reaction (2R,3S)-3-isopropylmalate + NAD(+) = 4-methyl-2-oxopentanoate + CO2 + NADH. It functions in the pathway amino-acid biosynthesis; L-leucine biosynthesis; L-leucine from 3-methyl-2-oxobutanoate: step 3/4. In terms of biological role, catalyzes the oxidation of 3-carboxy-2-hydroxy-4-methylpentanoate (3-isopropylmalate) to 3-carboxy-4-methyl-2-oxopentanoate. The product decarboxylates to 4-methyl-2 oxopentanoate. The chain is 3-isopropylmalate dehydrogenase (LEU2) from Debaryomyces hansenii (strain ATCC 36239 / CBS 767 / BCRC 21394 / JCM 1990 / NBRC 0083 / IGC 2968) (Yeast).